Consider the following 1157-residue polypeptide: Zinc finger protein 516 (1157 aa).

Positions 1-13 are enriched in basic and acidic residues; the sequence is MDRSREAEMELRR. Positions 1–26 are disordered; it reads MDRSREAEMELRRGPSPPRAGRSHEV. A mediates promoter DNA-binding and activation of transcription region spans residues 1-420; sequence MDRSREAEME…ATRGKVAEPA (420 aa). 7 consecutive C2H2-type zinc fingers follow at residues 34–56, 62–84, 162–185, 188–211, 236–258, 264–286, and 323–345; these read HSCC…MRKH, YKCP…IRSH, VPCS…HQAH, FKCR…ERDH, FPCE…MKKH, HGCH…MKAH, and EVCT…NAIH. Over residues 449–458 the composition is skewed to basic and acidic residues; that stretch reads SQEKRKREQD. 2 disordered regions span residues 449–503 and 523–653; these read SQEK…QGKS and SRVH…KGPE. Over residues 494–503 the composition is skewed to polar residues; it reads ASATTGQGKS. A C2H2-type 8 zinc finger spans residues 504 to 526; the sequence is SECFECGKIFRTYHQMVLHSRVH. Residues 531–541 are compositionally biased toward basic and acidic residues; the sequence is RDRDPEGDRAA. Polar residues predominate over residues 550-561; the sequence is EGDSASQPSSPG. Residues 575 to 585 are compositionally biased toward acidic residues; that stretch reads EVVDDSGEEAV. Positions 601-612 are enriched in polar residues; sequence GEVTPTALSNGD. Lysine 630 is covalently cross-linked (Glycyl lysine isopeptide (Lys-Gly) (interchain with G-Cter in SUMO2)). A compositionally biased stretch (basic and acidic residues) spans 644-653; sequence SSRETTKGPE. Lysine 669 participates in a covalent cross-link: Glycyl lysine isopeptide (Lys-Gly) (interchain with G-Cter in SUMO2). A C2H2-type 9; atypical zinc finger spans residues 753–776; it reads HPCPYCTHKTYYPEVLWMHKRIWH. Disordered stretches follow at residues 831–996 and 1013–1040; these read TQVP…EPSV and RGEA…AEGQ. Positions 914-928 are enriched in polar residues; sequence GSGSLSRSTTPTPSV. Residues lysine 1032 and lysine 1051 each participate in a glycyl lysine isopeptide (Lys-Gly) (interchain with G-Cter in SUMO2) cross-link. The segment at 1092–1114 adopts a C2H2-type 10 zinc-finger fold; sequence FVCVECGKSFHQPSQLRAHLRAH. Residues 1123 to 1157 are disordered; the sequence is PRDSEVHTASTDAPKQGRDHTTPGTVPAGPLRKGI.

The protein belongs to the krueppel C2H2-type zinc-finger protein family. As to quaternary structure, interacts with PRDM16; the interaction is direct and may play a role in the transcription of brown adipose tissue-specific genes. Interacts with PWWP2B. Interacts with HDAC1; this interaction is enhanced in the presence of PWWP2B. Expressed by adipocytes more specifically in brown adipose tissue compared to white adipose tissue (WAT).

It is found in the nucleus. In terms of biological role, transcriptional regulator that binds to the promoter and activates the transcription of genes promoting brown adipose tissue (BAT) differentiation. Among brown adipose tissue-specific genes, binds the proximal region of the promoter of the UCP1 gene to activate its transcription and thereby regulate thermogenesis. May also play a role in the cellular response to replication stress. This chain is Zinc finger protein 516, found in Mus musculus (Mouse).